Reading from the N-terminus, the 297-residue chain is MDLISSLSLGELALSFSRVPLFPVFDLSYFIVSIIYLKYEPGSVELSRRHPVASWLCAMLHCFGSYILADLLLGEPIIDYFSNSSSILLASGVWYLIFFCPLDLFYKCVCFLPVKLIFVAMKEVVRVRKIAVGIHHAHHYHHGWFIMIATGWVKGSGVALLSNLEQLLRGVWKPETNEILHMSFPTKASLYGAILFTLQQTRWLPVSKASLIFVFTMFMVSCKVFLTATHSHSSPFDVLEGYICPVLFGATWGGDHHHDNHGAPHGMGLGTQHSGLPAKAKEELSEGFRKKKTKKAD.

The Lumenal portion of the chain corresponds to 1-18; it reads MDLISSLSLGELALSFSR. A helical membrane pass occupies residues 19–39; sequence VPLFPVFDLSYFIVSIIYLKY. At 40 to 51 the chain is on the cytoplasmic side; it reads EPGSVELSRRHP. Residues 52-72 traverse the membrane as a helical segment; it reads VASWLCAMLHCFGSYILADLL. Over 73-85 the chain is Lumenal; the sequence is LGEPIIDYFSNSS. Position 74 (Gly-74) interacts with Ca(2+). The chain crosses the membrane as a helical span at residues 86-106; that stretch reads SILLASGVWYLIFFCPLDLFY. The Cytoplasmic segment spans residues 107–143; that stretch reads KCVCFLPVKLIFVAMKEVVRVRKIAVGIHHAHHYHHG. Lys-122 and Arg-126 together coordinate a 1,2-diacyl-sn-glycero-3-phospho-(1D-myo-inositol-4,5-bisphosphate). Residues 144–164 traverse the membrane as a helical segment; the sequence is WFIMIATGWVKGSGVALLSNL. The Lumenal segment spans residues 165 to 177; it reads EQLLRGVWKPETN. The chain crosses the membrane as a helical span at residues 178–198; the sequence is EILHMSFPTKASLYGAILFTL. Residues 199–208 lie on the Cytoplasmic side of the membrane; the sequence is QQTRWLPVSK. The chain crosses the membrane as a helical span at residues 209-229; the sequence is ASLIFVFTMFMVSCKVFLTAT. The Lumenal segment spans residues 230-233; it reads HSHS. The chain crosses the membrane as a helical span at residues 234–254; the sequence is SPFDVLEGYICPVLFGATWGG. Residues 255-297 lie on the Cytoplasmic side of the membrane; sequence DHHHDNHGAPHGMGLGTQHSGLPAKAKEELSEGFRKKKTKKAD. The disordered stretch occupies residues 259–297; it reads DNHGAPHGMGLGTQHSGLPAKAKEELSEGFRKKKTKKAD. Over residues 279 to 288 the composition is skewed to basic and acidic residues; the sequence is KAKEELSEGF.

This sequence belongs to the TMEM38 family. As to quaternary structure, homotrimer; conformation seems to be controled by binding to diacylglycerol (DAG).

Its subcellular location is the sarcoplasmic reticulum membrane. The protein resides in the nucleus membrane. The enzyme catalyses K(+)(in) = K(+)(out). With respect to regulation, channel activity is activated by a change of voltage within the sarcoplasmic reticulum lumen and blocked by luminal high Ca(2+) levels. In terms of biological role, intracellular monovalent cation channel required for maintenance of rapid intracellular calcium release. Acts as a potassium counter-ion channel that functions in synchronization with calcium release from intracellular stores. Opened by a change of voltage within the sarcoplasmic reticulum lumen. In Rattus norvegicus (Rat), this protein is Trimeric intracellular cation channel type A.